We begin with the raw amino-acid sequence, 573 residues long: Proline--tRNA ligase (573 aa).

The protein belongs to the class-II aminoacyl-tRNA synthetase family. ProS type 1 subfamily. In terms of assembly, homodimer.

It localises to the cytoplasm. The catalysed reaction is tRNA(Pro) + L-proline + ATP = L-prolyl-tRNA(Pro) + AMP + diphosphate. Catalyzes the attachment of proline to tRNA(Pro) in a two-step reaction: proline is first activated by ATP to form Pro-AMP and then transferred to the acceptor end of tRNA(Pro). As ProRS can inadvertently accommodate and process non-cognate amino acids such as alanine and cysteine, to avoid such errors it has two additional distinct editing activities against alanine. One activity is designated as 'pretransfer' editing and involves the tRNA(Pro)-independent hydrolysis of activated Ala-AMP. The other activity is designated 'posttransfer' editing and involves deacylation of mischarged Ala-tRNA(Pro). The misacylated Cys-tRNA(Pro) is not edited by ProRS. In Citrifermentans bemidjiense (strain ATCC BAA-1014 / DSM 16622 / JCM 12645 / Bem) (Geobacter bemidjiensis), this protein is Proline--tRNA ligase.